A 197-amino-acid polypeptide reads, in one-letter code: Female-specific protein transformer (197 aa).

Basic and acidic residues-rich tracts occupy residues 1-17 (MKMDADSSGTQHRDSRG) and 24-39 (REREYHGRSSERDSRK). 2 disordered regions span residues 1–136 (MKMD…PKII) and 158–197 (GYQRLPRPPPFPPAPYRYRQRPPFIGVPRFGYRNAGRPPY). Basic residues-rich tracts occupy residues 58 to 75 (RRLRQRAHQSTRRTRSRS) and 84 to 127 (SRHR…RSPH). Pro residues predominate over residues 163 to 172 (PRPPPFPPAP).

It is found in the nucleus speckle. Member of the regulatory pathway controlling female somatic sexual differentiation, regulated by Sxl. Activates dsx female-specific splicing by promoting the formation of a splicing enhancer complex which consists of tra, tra2 and sr proteins. Together with tra-2, plays a role in switching fru splicing from the male-specific pattern to the female-specific pattern through activation of the female-specific fru 5'-splice site. No known function in males. The sequence is that of Female-specific protein transformer (tra) from Drosophila melanogaster (Fruit fly).